The primary structure comprises 530 residues: MNQRRSANPSGKYLMALDAGTGSVRAVIFDLEGNQIAAGQAEWIHQPVPDVPGSMEFDLATNWQLVCQCIRQALKTAQLPASAIQGVASCSMREGIVLYNRNGEPIWACANVDARSSQEVSELKALYDSTFEYDVYRCSGQTLALGAMPRLLWLAHHRPDIYHQATALTMISDWLANMLSGELAVDPSNAGTTGMLDLVSRDWRPDLLEMAGLRSDILSPVKETGTLLGYVTEKAAVQCGLNIGTPVIMGGGDVQLGCLGLGVVKPAQTAVIGGTFWQQVVNLPEPVTDPNMNTRINPHVIPGMVQAESISFFTGLTMRWFRDAFCAEEKLLAERLGVDTYSLLEDMAARVPAGAYGVIPIFSDVMRFKAWYHAAPSFINLSIDPEKCNKATLFRALEENAAIVSACNLDLISAFSAVKPDSLVFAGGGSKGKLWSQILSDVTGLPVRVPMVKESTALGCAIAAGVGVGLYDAMGATGEKLVRWQHEYQPNPEHCEVYQKAKQDWQAIYADQLTLVDHGLTTSLWKAPGL.

Belongs to the FGGY kinase family.

The protein resides in the cytoplasm. The enzyme catalyses (S)-4,5-dihydroxypentane-2,3-dione + ATP = (2S)-2-hydroxy-3,4-dioxopentyl phosphate + ADP + H(+). Its function is as follows. Catalyzes the phosphorylation of autoinducer-2 (AI-2) to phospho-AI-2, which subsequently inactivates the transcriptional regulator LsrR and leads to the transcription of the lsr operon. Phosphorylates the ring-open form of (S)-4,5-dihydroxypentane-2,3-dione (DPD), which is the precursor to all AI-2 signaling molecules, at the C5 position. This Photorhabdus laumondii subsp. laumondii (strain DSM 15139 / CIP 105565 / TT01) (Photorhabdus luminescens subsp. laumondii) protein is Autoinducer-2 kinase.